The primary structure comprises 104 residues: Protein enhancer of rudimentary (104 aa).

Residue Thr-18 is modified to Phosphothreonine; by CK2. The residue at position 24 (Ser-24) is a Phosphoserine; by CK2.

The protein belongs to the E(R) family.

Its function is as follows. Acts as an enhancer of the rudimentary gene. Has a role in pyrimidine biosynthesis and the cell cycle. This chain is Protein enhancer of rudimentary (e(r)), found in Drosophila virilis (Fruit fly).